We begin with the raw amino-acid sequence, 172 residues long: uncharacterized protein (172 aa).

This is an uncharacterized protein from Agrobacterium tumefaciens (strain Ach5).